Reading from the N-terminus, the 170-residue chain is Lipoprotein signal peptidase (170 aa).

The next 3 helical transmembrane spans lie at 5 to 25 (IVGV…KAYA), 62 to 82 (SNLI…VLFV), and 89 to 111 (STIC…LRFG). Residues Asp-115 and Asp-133 contribute to the active site. A helical membrane pass occupies residues 126-146 (WPAFNFADVCVTCGVICFLCL).

It belongs to the peptidase A8 family.

The protein resides in the cell inner membrane. The enzyme catalyses Release of signal peptides from bacterial membrane prolipoproteins. Hydrolyzes -Xaa-Yaa-Zaa-|-(S,diacylglyceryl)Cys-, in which Xaa is hydrophobic (preferably Leu), and Yaa (Ala or Ser) and Zaa (Gly or Ala) have small, neutral side chains.. The protein operates within protein modification; lipoprotein biosynthesis (signal peptide cleavage). Functionally, this protein specifically catalyzes the removal of signal peptides from prolipoproteins. This chain is Lipoprotein signal peptidase, found in Anaplasma marginale (strain Florida).